The chain runs to 284 residues: 2,3,4,5-tetrahydropyridine-2,6-dicarboxylate N-succinyltransferase (284 aa).

Arg-111 and Asp-148 together coordinate substrate.

The protein belongs to the transferase hexapeptide repeat family. Homotrimer.

It is found in the cytoplasm. The catalysed reaction is (S)-2,3,4,5-tetrahydrodipicolinate + succinyl-CoA + H2O = (S)-2-succinylamino-6-oxoheptanedioate + CoA. It functions in the pathway amino-acid biosynthesis; L-lysine biosynthesis via DAP pathway; LL-2,6-diaminopimelate from (S)-tetrahydrodipicolinate (succinylase route): step 1/3. This Brucella anthropi (strain ATCC 49188 / DSM 6882 / CCUG 24695 / JCM 21032 / LMG 3331 / NBRC 15819 / NCTC 12168 / Alc 37) (Ochrobactrum anthropi) protein is 2,3,4,5-tetrahydropyridine-2,6-dicarboxylate N-succinyltransferase.